Here is a 529-residue protein sequence, read N- to C-terminus: Lysine--tRNA ligase (529 aa).

The short motif at 44–52 is the 'HIGH' region element; it reads PSGLPHIGT. Positions 290 to 294 match the 'KMSKS' region motif; it reads KISKS. ATP is bound at residue Lys293.

The protein belongs to the class-I aminoacyl-tRNA synthetase family.

It is found in the cytoplasm. It carries out the reaction tRNA(Lys) + L-lysine + ATP = L-lysyl-tRNA(Lys) + AMP + diphosphate. The chain is Lysine--tRNA ligase from Rickettsia akari (strain Hartford).